Here is a 1207-residue protein sequence, read N- to C-terminus: DNA-directed RNA polymerase subunit beta' (1207 aa).

Zn(2+)-binding residues include Cys-60, Cys-62, Cys-75, and Cys-78. Residues Asp-449, Asp-451, and Asp-453 each coordinate Mg(2+). Residues Cys-822, Cys-896, Cys-903, and Cys-906 each contribute to the Zn(2+) site.

The protein belongs to the RNA polymerase beta' chain family. The RNAP catalytic core consists of 2 alpha, 1 beta, 1 beta' and 1 omega subunit. When a sigma factor is associated with the core the holoenzyme is formed, which can initiate transcription. Requires Mg(2+) as cofactor. Zn(2+) serves as cofactor.

The enzyme catalyses RNA(n) + a ribonucleoside 5'-triphosphate = RNA(n+1) + diphosphate. Functionally, DNA-dependent RNA polymerase catalyzes the transcription of DNA into RNA using the four ribonucleoside triphosphates as substrates. This chain is DNA-directed RNA polymerase subunit beta', found in Staphylococcus saprophyticus subsp. saprophyticus (strain ATCC 15305 / DSM 20229 / NCIMB 8711 / NCTC 7292 / S-41).